A 269-amino-acid chain; its full sequence is Enoyl-[acyl-carrier-protein] reductase [NADH] (269 aa).

Residues 20-21 (SI), 64-65 (DV), and 95-96 (IG) contribute to the NAD(+) site. Tyrosine 158 contributes to the substrate binding site. 2 residues coordinate NAD(+): lysine 165 and isoleucine 194. Threonine 266 is subject to Phosphothreonine.

It belongs to the short-chain dehydrogenases/reductases (SDR) family. FabI subfamily. Homodimer. Homotetramer. In terms of processing, is phosphorylated in vivo. Phosphorylation on Thr-266 decreases enzymatic activity.

The protein localises to the secreted. It is found in the cell wall. The enzyme catalyses a 2,3-saturated acyl-[ACP] + NAD(+) = a (2E)-enoyl-[ACP] + NADH + H(+). The catalysed reaction is a 2,3-saturated acyl-CoA + NAD(+) = a (2E)-enoyl-CoA + NADH + H(+). It carries out the reaction (2E)-octenoyl-CoA + NADH + H(+) = octanoyl-CoA + NAD(+). It catalyses the reaction (2E)-dodecenoyl-CoA + NADH + H(+) = dodecanoyl-CoA + NAD(+). The protein operates within lipid metabolism; mycolic acid biosynthesis. InhA activity is controlled via phosphorylation: phosphorylation on Thr-266 decreases InhA activity and likely negatively regulates biosynthesis of mycolic acids and growth of the bacterium. InhA activity is likely inhibited by activated isoniazid, hexadecynoyl-CoA and octadecynoyl-CoA, which also block the biosynthesis of mycolic acids. The antitubercular pro-drug isoniazid (INH) is oxidatively activated by the catalase-peroxidase KatG and then covalently binds NAD to form an adduct that inhibits the activity of InhA. The inhibitory adduct is the isonicotinic-acyl-NADH where the isonicotinic-acyl group replaces the 4S (and not the 4R) hydrogen of NADH. Similarly, the antitubercular pro-drugs ethionamide (ETH) and prothionamide (PTH) are activated by the flavoprotein monooxygenase EthA, and forms an adduct with NAD (ETH-NAD and PTH-NAD, respectively) that is a tight-binding inhibitor of InhA. Enoyl-ACP reductase of the type II fatty acid syntase (FAS-II) system, which is involved in the biosynthesis of mycolic acids, a major component of mycobacterial cell walls. Catalyzes the NADH-dependent reduction of the double bond of 2-trans-enoyl-[acyl-carrier protein], an essential step in the fatty acid elongation cycle of the FAS-II pathway. Shows preference for long-chain fatty acyl thioester substrates (&gt;C16), and can also use 2-trans-enoyl-CoAs as alternative substrates. The mycobacterial FAS-II system utilizes the products of the FAS-I system as primers to extend fatty acyl chain lengths up to C56, forming the meromycolate chain that serves as the precursor for final mycolic acids. In terms of biological role, is the primary target of the first-line antitubercular drug isoniazid (INH) and of the second-line drug ethionamide (ETH). Overexpressed inhA confers INH and ETH resistance to M.smegmatis. The mechanism of isoniazid action against InhA is covalent attachment of the activated form of the drug to the nicotinamide ring of NAD and binding of the INH-NAD adduct to the active site of InhA. Similarly, the ETH-NAD adduct binds InhA. The sequence is that of Enoyl-[acyl-carrier-protein] reductase [NADH] from Mycolicibacterium smegmatis (strain ATCC 700084 / mc(2)155) (Mycobacterium smegmatis).